A 550-amino-acid polypeptide reads, in one-letter code: Eukaryotic translation initiation factor 3 subunit D-2 (550 aa).

The tract at residues 108–152 (RTRGRTGRGTPNIASLGGSTAGGATASTTKYGKGRHTRNTQNVGR) is disordered. Residues 115–136 (RGTPNIASLGGSTAGGATASTT) show a composition bias toward low complexity. The RNA gate stretch occupies residues 290–304 (QFDLLTVNETSVEPP). A disordered region spans residues 527-550 (PENAFDSDRDEEESSEPLSNSNDN).

The protein belongs to the eIF-3 subunit D family. As to quaternary structure, component of the eukaryotic translation initiation factor 3 (eIF-3) complex. The eIF-3 complex interacts with pix.

The protein resides in the cytoplasm. Functionally, mRNA cap-binding component of the eukaryotic translation initiation factor 3 (eIF-3) complex, which is involved in protein synthesis of a specialized repertoire of mRNAs and, together with other initiation factors, stimulates binding of mRNA and methionyl-tRNAi to the 40S ribosome. The eIF-3 complex specifically targets and initiates translation of a subset of mRNAs involved in cell proliferation. In the eIF-3 complex, eif3d specifically recognizes and binds the 7-methylguanosine cap of a subset of mRNAs. The polypeptide is Eukaryotic translation initiation factor 3 subunit D-2 (Drosophila sechellia (Fruit fly)).